The sequence spans 305 residues: Uridylate-specific endoribonuclease D (305 aa).

Residues 1-17 (MKVYFVFLCLLPSLISG) form the signal peptide. The EndoU domain occupies 33-305 (SNAEIQSLAE…RYVASSYPNI (273 aa)). Catalysis depends on residues His-182, His-197, and Lys-240. Asn-288 is a glycosylation site (N-linked (GlcNAc...) asparagine).

The protein belongs to the ENDOU family. Monomer. The cofactor is Mn(2+).

The protein resides in the secreted. It catalyses the reaction ribonucleotidyl-uridine-RNA = a 5'-end dephospho-uridine-RNA + a 3'-end 2',3'-cyclophospho-ribonucleotide-RNA. Endoribonuclease that cleaves single-stranded RNAs at 5' of uridylates and releases a product with a 2',3'-cyclic phosphate at the 3'-end. The protein is Uridylate-specific endoribonuclease D (endou-d) of Xenopus laevis (African clawed frog).